The sequence spans 921 residues: Protein translocase subunit SecA (921 aa).

ATP is bound by residues Q86, 104–108 (GEGKT), and D497. Positions 829 to 838 (QQAPQQQPQQ) are enriched in low complexity. Residues 829–921 (QQAPQQQPQQ…CHGAIETQKA (93 aa)) are disordered. Over residues 839-855 (VAPPPRPQPPQPAPQPP) the composition is skewed to pro residues. Zn(2+) is bound by residues C901, C903, C912, and H913.

It belongs to the SecA family. In terms of assembly, monomer and homodimer. Part of the essential Sec protein translocation apparatus which comprises SecA, SecYEG and auxiliary proteins SecDF-YajC and YidC. Zn(2+) is required as a cofactor.

Its subcellular location is the cell inner membrane. It localises to the cytoplasm. It carries out the reaction ATP + H2O + cellular proteinSide 1 = ADP + phosphate + cellular proteinSide 2.. Functionally, part of the Sec protein translocase complex. Interacts with the SecYEG preprotein conducting channel. Has a central role in coupling the hydrolysis of ATP to the transfer of proteins into and across the cell membrane, serving both as a receptor for the preprotein-SecB complex and as an ATP-driven molecular motor driving the stepwise translocation of polypeptide chains across the membrane. In Hyphomonas neptunium (strain ATCC 15444), this protein is Protein translocase subunit SecA.